Consider the following 465-residue polypeptide: MTRVNQLPCDCVSTAEESLTSGTCITPTHVTSLSSPLDRSGDVDPLPVSDESGGSKADESMTDADETKKRKRILSGDCEADENNKSDGEIASLNDGVDAFTAICEDLNCSLCNQLPDRPVTILCGHNFCLKCFDKWIDQGNQICATCRSTIPDKMAANPRVNSSLVSVIRYVKVAKTAGVGTANFFPFTSNQDGPENAFRTKRAKIGEENAARIYVTVPFDHFGPIPAEHDPVRNQGVLVGESWENRVECRQWGVHLPHVSCIAGQEDYGAQSVVISGGYKDDEDHGEWFLYTGRSRGRHFANEDQEFEDLNEALRVSCEMGYPVRVVRSYKDRYSAYAPKEGVRYDGVYRIEKCWRKARFPDSFKVCRYLFVRCDNEPAPWNSDESGDRPRPLPNIPELETASDLFERKESPSWDFDEAEGRWRWMKPPPANHEQRERMKMAMTCLLLFVLIILVGSSSILYQY.

Positions 31–69 (TSLSSPLDRSGDVDPLPVSDESGGSKADESMTDADETKK) are disordered. The RING-type zinc-finger motif lies at 109-148 (CSLCNQLPDRPVTILCGHNFCLKCFDKWIDQGNQICATCR). In terms of domain architecture, YDG spans 233–374 (VRNQGVLVGE…FKVCRYLFVR (142 aa)). A helical membrane pass occupies residues 442 to 462 (MAMTCLLLFVLIILVGSSSIL).

It localises to the nucleus. It is found in the membrane. It catalyses the reaction S-ubiquitinyl-[E2 ubiquitin-conjugating enzyme]-L-cysteine + [acceptor protein]-L-lysine = [E2 ubiquitin-conjugating enzyme]-L-cysteine + N(6)-ubiquitinyl-[acceptor protein]-L-lysine.. It functions in the pathway protein modification; protein ubiquitination. In terms of biological role, E3 ubiquitin-protein ligase. May participate in methylation-dependent transcriptional regulation. Mediates ubiquitination with the E2 ubiquitin-conjugating enzyme UBC11. This chain is E3 ubiquitin-protein ligase ORTHRUS-LIKE 1 (ORTHL), found in Arabidopsis thaliana (Mouse-ear cress).